A 274-amino-acid polypeptide reads, in one-letter code: NH(3)-dependent NAD(+) synthetase (274 aa).

An ATP-binding site is contributed by 46–53; the sequence is GISGGQDS. A Mg(2+)-binding site is contributed by aspartate 52. A deamido-NAD(+)-binding site is contributed by arginine 140. Position 160 (threonine 160) interacts with ATP. Glutamate 165 contributes to the Mg(2+) binding site. Lysine 173 and aspartate 180 together coordinate deamido-NAD(+). ATP is bound by residues lysine 189 and threonine 211. 260–261 serves as a coordination point for deamido-NAD(+); the sequence is HK.

Belongs to the NAD synthetase family. As to quaternary structure, homodimer.

It carries out the reaction deamido-NAD(+) + NH4(+) + ATP = AMP + diphosphate + NAD(+) + H(+). Its pathway is cofactor biosynthesis; NAD(+) biosynthesis; NAD(+) from deamido-NAD(+) (ammonia route): step 1/1. Functionally, catalyzes the ATP-dependent amidation of deamido-NAD to form NAD. Uses ammonia as a nitrogen source. This is NH(3)-dependent NAD(+) synthetase from Streptococcus equi subsp. equi (strain 4047).